Reading from the N-terminus, the 517-residue chain is Apolipoprotein N-acyltransferase (517 aa).

Transmembrane regions (helical) follow at residues 5–25, 26–46, 55–75, 90–110, 128–148, 162–182, and 193–213; these read SFFS…ATLT, FAPY…LWLL, GLIG…WVHV, FLMS…GALF, VIWL…PWLW, APIL…GALV, and LMVP…SWVV. The 247-residue stretch at 225 to 471 folds into the CN hydrolase domain; the sequence is IQGNVPQELK…TAVLRATITP (247 aa). Catalysis depends on glutamate 264, which acts as the Proton acceptor. Residue lysine 330 is part of the active site. Residue cysteine 382 is the Nucleophile of the active site.

It belongs to the CN hydrolase family. Apolipoprotein N-acyltransferase subfamily.

The protein localises to the cell inner membrane. The enzyme catalyses N-terminal S-1,2-diacyl-sn-glyceryl-L-cysteinyl-[lipoprotein] + a glycerophospholipid = N-acyl-S-1,2-diacyl-sn-glyceryl-L-cysteinyl-[lipoprotein] + a 2-acyl-sn-glycero-3-phospholipid + H(+). The protein operates within protein modification; lipoprotein biosynthesis (N-acyl transfer). Catalyzes the phospholipid dependent N-acylation of the N-terminal cysteine of apolipoprotein, the last step in lipoprotein maturation. This chain is Apolipoprotein N-acyltransferase, found in Photobacterium profundum (strain SS9).